The primary structure comprises 822 residues: Pentatricopeptide repeat-containing protein At2g18940, chloroplastic (822 aa).

Residues 1-42 (MDGALFPHKPPYPIQSKRPPPSQSSNQSIKFSSATLHLPPPS) are disordered. A chloroplast-targeting transit peptide spans 1–77 (MDGALFPHKP…SAAARFPSLE (77 aa)). Over residues 8–22 (HKPPYPIQSKRPPPS) the composition is skewed to pro residues. Positions 23-37 (QSSNQSIKFSSATLH) are enriched in low complexity. 17 PPR repeats span residues 209–243 (DVRAYTTILHAYSRTGKYEKAIDLFERMKEMGPSP), 244–279 (TLVTYNVILDVFGKMGRSWRKILGVLDEMRSKGLKF), 280–314 (DEFTCSTVLSACAREGLLREAKEFFAELKSCGYEP), 315–349 (GTVTYNALLQVFGKAGVYTEALSVLKEMEENSCPA), 350–384 (DSVTYNELVAAYVRAGFSKEAAGVIEMMTKKGVMP), 385–419 (NAITYTTVIDAYGKAGKEDEALKLFYSMKEAGCVP), 420–454 (NTCTYNAVLSLLGKKSRSNEMIKMLCDMKSNGCSP), 455–489 (NRATWNTMLALCGNKGMDKFVNRVFREMKSCGFEP), 490–524 (DRDTFNTLISAYGRCGSEVDASKMYGEMTRAGFNA), 525–559 (CVTTYNALLNALARKGDWRSGENVISDMKSKGFKP), 560–594 (TETSYSLMLQCYAKGGNYLGIERIENRIKEGQIFP), 595–629 (SWMLLRTLLLANFKCRALAGSERAFTLFKKHGYKP), 630–664 (DMVIFNSMLSIFTRNNMYDQAEGILESIREDGLSP), 665–699 (DLVTYNSLMDMYVRRGECWKAEEILKTLEKSQLKP), 700–734 (DLVSYNTVIKGFCRRGLMQEAVRMLSEMTERGIRP), 735–769 (CIFTYNTFVSGYTAMGMFAEIEDVIECMAKNDCRP), and 770–800 (NELTFKMVVDGYCRAGKYSEAMDFVSKIKTF).

Belongs to the PPR family. P subfamily.

The protein resides in the plastid. It is found in the chloroplast. The sequence is that of Pentatricopeptide repeat-containing protein At2g18940, chloroplastic from Arabidopsis thaliana (Mouse-ear cress).